Consider the following 1099-residue polypeptide: ATP-dependent helicase/deoxyribonuclease subunit B (1099 aa).

[4Fe-4S] cluster is bound by residues cysteine 766, cysteine 1056, cysteine 1059, and cysteine 1065.

Belongs to the helicase family. AddB/RexB type 2 subfamily. In terms of assembly, heterodimer of AddA and RexB. The cofactor is Mg(2+). Requires [4Fe-4S] cluster as cofactor.

Its function is as follows. The heterodimer acts as both an ATP-dependent DNA helicase and an ATP-dependent, dual-direction single-stranded exonuclease. Recognizes the chi site generating a DNA molecule suitable for the initiation of homologous recombination. This subunit has 5' -&gt; 3' nuclease activity but not helicase activity. This chain is ATP-dependent helicase/deoxyribonuclease subunit B, found in Lactococcus lactis subsp. lactis (strain IL1403) (Streptococcus lactis).